Reading from the N-terminus, the 129-residue chain is Holo-[acyl-carrier-protein] synthase (129 aa).

Mg(2+) contacts are provided by Asp-8 and Glu-60.

This sequence belongs to the P-Pant transferase superfamily. AcpS family. Mg(2+) is required as a cofactor.

It localises to the cytoplasm. The catalysed reaction is apo-[ACP] + CoA = holo-[ACP] + adenosine 3',5'-bisphosphate + H(+). In terms of biological role, transfers the 4'-phosphopantetheine moiety from coenzyme A to a Ser of acyl-carrier-protein. The protein is Holo-[acyl-carrier-protein] synthase of Anaeromyxobacter sp. (strain Fw109-5).